We begin with the raw amino-acid sequence, 1241 residues long: eIF-2-alpha kinase GCN2 (1241 aa).

The segment covering 1–15 (MGRSSSKKKKKRGGS) has biased composition (basic residues). The tract at residues 1-33 (MGRSSSKKKKKRGGSGRRGQLKDHGSNADEDNE) is disordered. The RWD domain maps to 37-148 (EEITALSAIF…EAAQEFLSEI (112 aa)). A disordered region spans residues 253 to 321 (PIAKLNTVQE…SLGSWSSDSL (69 aa)). Low complexity-rich tracts occupy residues 267–276 (DTSISSFDSS) and 307–321 (NSES…SDSL). A Protein kinase domain is found at 425-731 (FEELKPLGQG…ATELLKHAFP (307 aa)). ATP is bound by residues 431–439 (LGQGGFGHV) and K454. Residue D586 is the Proton acceptor of the active site. Residues 819-1219 (IPMRLLSDCP…ELKKEKVVGR (401 aa)) form a histidyl-tRNA synthetase-like region.

Belongs to the protein kinase superfamily. Ser/Thr protein kinase family. GCN2 subfamily. As to quaternary structure, homodimer; homodimerization is important for kinase activation by uncharged tRNAs. In terms of tissue distribution, expressed in roots, leaves, stems, buds, flowers, siliques and seedlings.

Its subcellular location is the cytoplasm. It catalyses the reaction L-seryl-[protein] + ATP = O-phospho-L-seryl-[protein] + ADP + H(+). It carries out the reaction L-threonyl-[protein] + ATP = O-phospho-L-threonyl-[protein] + ADP + H(+). With respect to regulation, the kinase activity is stimulated upon binding to uncharged tRNAs. Functionally, metabolic-stress sensing protein kinase that phosphorylates the alpha subunit of eukaryotic translation initiation factor 2 eIF-2-alpha in response to low amino acid availability. Plays a role as an activator of the general amino acid control pathway required for adapatation to amino acid starvation. Converts phosphorylated eIF-2-alpha either to a competitive inhibitor of translation initiation, leading to a global protein synthesis repression, and thus to a reduced overall utilization of amino acids, or to a translational initiation activation of specific mRNAs, and hence allowing reprogramming of amino acid biosynthetic gene expression to alleviate nutrient depletion. Binds uncharged tRNAs. The sequence is that of eIF-2-alpha kinase GCN2 from Arabidopsis thaliana (Mouse-ear cress).